The primary structure comprises 527 residues: MAKFRQMGSSIFFLFLIIISLCSAHKEAFSSTDLVQMECLRVPPLEFAEAAKTVVDAITKAVAIVSKFDKKAGKSRVSNAIVDCVDLLDSAAEELSWIISASQSPNGKDNSTGDVGSDLRTWISAALSNQDTCLDGFEGTNGIIKKIVAGGLSKVGTTVRNLLTMVHSPPSKPKPKPIKAQTMTKAHSGFSKFPSWVKPGDRKLLQTDNITVADAVVAADGTGNFTTISDAVLAAPDYSTKRYVIHVKRGVYVENVEIKKKKWNIMMVGDGIDATVITGNRSFIDGWTTFRSATFAVSGRGFIARDITFQNTAGPEKHQAVAIRSDTDLGVFYRCAMRGYQDTLYAHSMRQFFRECIITGTVDFIFGDATAVFQSCQIKAKQGLPNQKNSITAQGRKDPNEPTGFTIQFSNIAADTDLLLNLNTTATYLGRPWKLYSRTVFMQNYMSDAINPVGWLEWNGNFALDTLYYGEYMNSGPGASLDRRVKWPGYHVLNTSAEANNFTVSQLIQGNLWLPSTGITFIAGLVS.

Positions methionine 1–alanine 24 are cleaved as a signal peptide. Positions histidine 25–methionine 165 are pectinesterase inhibitor 32. 4 N-linked (GlcNAc...) asparagine glycosylation sites follow: asparagine 110, asparagine 209, asparagine 224, and asparagine 280. Positions aspartate 214–asparagine 511 are pectinesterase 32. Residues threonine 289 and glutamine 319 each coordinate substrate. Aspartate 342 (proton donor; for pectinesterase activity) is an active-site residue. Cysteines 356 and 376 form a disulfide. The active-site Nucleophile; for pectinesterase activity is aspartate 363. Asparagine 423 carries N-linked (GlcNAc...) asparagine glycosylation. Substrate-binding residues include arginine 431 and tryptophan 433. Residues asparagine 494 and asparagine 501 are each glycosylated (N-linked (GlcNAc...) asparagine).

It in the N-terminal section; belongs to the PMEI family. This sequence in the C-terminal section; belongs to the pectinesterase family. In terms of tissue distribution, expressed in siliques.

Its subcellular location is the secreted. The protein localises to the cell wall. It carries out the reaction [(1-&gt;4)-alpha-D-galacturonosyl methyl ester](n) + n H2O = [(1-&gt;4)-alpha-D-galacturonosyl](n) + n methanol + n H(+). Its pathway is glycan metabolism; pectin degradation; 2-dehydro-3-deoxy-D-gluconate from pectin: step 1/5. Acts in the modification of cell walls via demethylesterification of cell wall pectin. The polypeptide is Probable pectinesterase/pectinesterase inhibitor 32 (PME32) (Arabidopsis thaliana (Mouse-ear cress)).